A 379-amino-acid polypeptide reads, in one-letter code: Stimulator of interferon genes protein (379 aa).

Over 1–17 (MPYSNLHPSIPRPRSYR) the chain is Cytoplasmic. Positions 1–190 (MPYSNLHPSI…MFNQLHNNML (190 aa)) are mediates interaction with ZDHHC1 and ZDHHC11. Residues 18–34 (FKLAAFVLLVGSLMSLW) traverse the membrane as a helical segment. The Lumenal portion of the chain corresponds to 35 to 44 (MTGEPPSHTL). Residues 45–69 (HYLALHVASQQLGLLLKKLCCLAEE) form a helical membrane-spanning segment. The Cytoplasmic portion of the chain corresponds to 70–91 (LCHVQSRYQGSYWKAVRACVGS). A lipid anchor (S-palmitoyl cysteine) is attached at cysteine 88. A helical transmembrane segment spans residues 92–106 (PICFMALILLSFYFY). Over 107-116 (CSLENTSDLR) the chain is Lumenal. Residues 117–134 (LAWHLGILVLSKSLSMTL) form a helical membrane-spanning segment. The Cytoplasmic portion of the chain corresponds to 135–379 (DLQSLAPAEV…QPLPLRTDLI (245 aa)). Residue lysine 151 forms a Glycyl lysine isopeptide (Lys-Gly) (interchain with G-Cter in ubiquitin) linkage. The segment at 153–340 (FNVAHGLAWS…RHIRQEEKEE (188 aa)) is cyclic dinucleotide-binding domain (CBD). 162–167 (SYYIGY) serves as a coordination point for 2',3'-cGAMP. Glycine 166 contacts 3',3'-c-di-GMP. Position 167 (tyrosine 167) interacts with 2',3'-cUAMP. A Glycyl lysine isopeptide (Lys-Gly) (interchain with G-Cter in ubiquitin) cross-link involves residue lysine 236. Arginine 238 is a binding site for 2',3'-cUAMP. 2',3'-cGAMP-binding positions include 238 to 241 (RAYS) and threonine 263. 3',3'-c-di-GMP contacts are provided by residues 238–241 (RAYS) and threonine 263. Serine 241 carries the post-translational modification Phosphoserine. Position 263 (threonine 263) interacts with 2',3'-cUAMP. Residue lysine 338 forms a Glycyl lysine isopeptide (Lys-Gly) (interchain with G-Cter in SUMO) linkage. The tract at residues 340–379 (EVTMSGPPTSVAPRPSLLSQEPRLLISGMEQPLPLRTDLI) is C-terminal tail (CTT). At serine 355 the chain carries Phosphoserine. A phosphoserine; by TBK1 mark is found at serine 358 and serine 366. A pLxIS motif motif is present at residues 363–366 (LLIS).

It belongs to the STING family. As to quaternary structure, homodimer; forms a homodimer in absence of cyclic nucleotide (c-di-GMP or cGAMP); 'Lys-63'-linked ubiquitination at Lys-151 is required for homodimerization. Homotetramer; in presence of cyclic nucleotide (c-di-GMP or cGAMP), forms tetramers and higher-order oligomers through side-by-side packing. Interacts (when phosphorylated) with IRF3; following activation and phosphorylation on the pLxIS motif by TBK1, recruits IRF3. Interacts with RIGI, MAVS and SSR2. Interacts with RNF5 and TRIM56. Interacts with TBK1; when homodimer, leading to subsequent production of IFN-beta. Interacts with IFIT1 and IFIT2. Interacts with TRIM29; this interaction induces STING1 ubiquitination and subsequent degradation. Associates with the MHC-II complex. Interacts with STEEP1; interaction takes place upon cGAMP-activation and STING1 phosphorylation by MAP3K7/TAK1 and promotes STING1 translocation to COPII vesicles. Interacts with SEC24A, SEC24B and SEC24C; promoting translocation to COPII vesicles. Interacts (when ubiquitinated) with SQSTM1; leading to relocalization to autophagosomes. Interacts with SURF4. Interacts with HNRNPA2B1. Interacts with ZDHHC1; ZDHHC1 constitutively interacts with STING1 and in presence of DNA viruses activates it by promoting its cGAMP-induced oligomerization and the recruitment of downstream signaling components. Interacts with ZDHHC11; in presence of DNA viruses promotes the recruitment of IRF3 to STING1. Interacts with TOMM70. Interacts with TAB1; promoting recruitment of TAB1 to the endoplasmic reticulum membrane and subsequent activation of MAP3K7/TAK1. Interacts (via transmembrane domain) with TMEM203. Interacts with DDX41. Post-translationally, phosphorylation by TBK1 leads to activation and production of IFN-beta. Following cyclic nucleotide (c-di-GMP or cGAMP)-binding, activation and translocation from the endoplasmic reticulum, STING1 is phosphorylated by TBK1 at Ser-366 in the pLxIS motif. The phosphorylated pLxIS motif constitutes an IRF3-binding motif, leading to recruitment of the transcription factor IRF3 to induce type-I interferons and other cytokines. Phosphorylated on tyrosine residues upon MHC-II aggregation. Dephosphorylation by PPP6C leads to inactivation and decreased production of IFN-beta. Phosphorylation at Ser-358 is also required to activate IRF3. Phosphorylation at Ser-355 by MAP3K7/TAK1 facilitates its interaction with STEEP1, promoting STING1 translocation to COPII vesicles. Ubiquitinated. Ubiquitinated via 'Lys-63'-linked ubiquitin chains in response to double-stranded DNA treatment, leading to relocalization to autophagosomes and subsequent degradation; this process is dependent on SQSTM1. 'Lys-63'-linked ubiquitination mediated by TRIM56 at Lys-151 promotes homodimerization and recruitment of the antiviral kinase TBK1 and subsequent production of IFN-beta. 'Lys-48'-linked polyubiquitination at Lys-151 occurring after viral infection is mediated by RNF5 and leads to proteasomal degradation. 'Lys-11'-linked polyubiquitination at Lys-151 by RNF26 leads to stabilize STING1: it protects STING1 from RNF5-mediated 'Lys-48'-linked polyubiquitination. 'Lys-33'-linked and 'Lys-48'-linked deubiquitinated by USP20; leading to its stabilization and promotion of innate antiviral response. 'Lys-48'-linked deubiquitinated by USP44; leading to its stabilization and promotion of innate antiviral response. Deubiquitinated by USP13; leading to inhibition of innate antiviral response. 'Lys-63'-linked deubiquitinated by USP49; leading to inhibition of the subsequent recruitment of TBK1 to the signaling complex. 'Lys-63'-linked ubiquitination mediated by RNF39 promotes the activation of the cGAS-STING pathway. In terms of processing, sumoylated at Lys-338 by TRIM38 during the early phase of viral infection, promoting its stability by preventing its relocalization to autophagosomes and subsequent degradation. Desumoylated by SENP2 during the late phase of viral infection. Post-translationally, palmitoylation takes place in the Golgi apparatus and creates a platform for the recruitment of TBK1.

The protein localises to the endoplasmic reticulum membrane. The protein resides in the cytoplasm. Its subcellular location is the perinuclear region. It is found in the endoplasmic reticulum-Golgi intermediate compartment membrane. It localises to the golgi apparatus membrane. The protein localises to the cytoplasmic vesicle. The protein resides in the autophagosome membrane. Its subcellular location is the mitochondrion outer membrane. It is found in the cell membrane. The enzyme catalyses H(+)(in) = H(+)(out). With respect to regulation, in contrast to mouse protein, not activated by anticancer molecule 5,6-dimethylxanthenone 4-acetic acid (DMXAA). In terms of biological role, facilitator of innate immune signaling that acts as a sensor of cytosolic DNA from bacteria and viruses and promotes the production of type I interferon (IFN-alpha and IFN-beta). Innate immune response is triggered in response to non-CpG double-stranded DNA from viruses and bacteria delivered to the cytoplasm. Acts by binding cyclic dinucleotides: recognizes and binds cyclic di-GMP (c-di-GMP), a second messenger produced by bacteria, cyclic UMP-AMP (2',3'-cUAMP), and cyclic GMP-AMP (cGAMP), a messenger produced by CGAS in response to DNA virus in the cytosol. Upon binding to c-di-GMP, cUAMP or cGAMP, STING1 oligomerizes, translocates from the endoplasmic reticulum and is phosphorylated by TBK1 on the pLxIS motif, leading to recruitment and subsequent activation of the transcription factor IRF3 to induce expression of type I interferon and exert a potent anti-viral state. Exhibits 2',3' phosphodiester linkage-specific ligand recognition: can bind both 2'-3' linked cGAMP (2'-3'-cGAMP) and 3'-3' linked cGAMP but is preferentially activated by 2'-3' linked cGAMP. The preference for 2'-3'-cGAMP, compared to other linkage isomers is probably due to the ligand itself, whichs adopts an organized free-ligand conformation that resembles the STING1-bound conformation and pays low energy costs in changing into the active conformation. In addition to promote the production of type I interferons, plays a direct role in autophagy. Following cGAMP-binding, STING1 buds from the endoplasmic reticulum into COPII vesicles, which then form the endoplasmic reticulum-Golgi intermediate compartment (ERGIC). The ERGIC serves as the membrane source for WIPI2 recruitment and LC3 lipidation, leading to formation of autophagosomes that target cytosolic DNA or DNA viruses for degradation by the lysosome. Promotes autophagy by acting as a proton channel that directs proton efflux from the Golgi to facilitate MAP1LC3B/LC3B lipidation. The autophagy- and interferon-inducing activities can be uncoupled and autophagy induction is independent of TBK1 phosphorylation. Autophagy is also triggered upon infection by bacteria: following c-di-GMP-binding, which is produced by live Gram-positive bacteria, promotes reticulophagy. May be involved in translocon function, the translocon possibly being able to influence the induction of type I interferons. May be involved in transduction of apoptotic signals via its association with the major histocompatibility complex class II (MHC-II). This Rattus norvegicus (Rat) protein is Stimulator of interferon genes protein.